Consider the following 1402-residue polypeptide: Transcription elongation factor spt-6 (1402 aa).

The interval 1–199 (MSNSMRDLID…PKDRGLNIDT (199 aa)) is disordered. Acidic residues-rich tracts occupy residues 10 to 28 (DGEA…DEEA), 40 to 52 (DSSE…EDEE), 62 to 75 (IVDE…EDSD), and 90 to 102 (EEEE…DLDL). Over residues 123 to 135 (HRDDHRPTERRGL) the composition is skewed to basic and acidic residues. Residues 161–176 (DEFDDFIEDDYPEDDE) are compositionally biased toward acidic residues. Residues 177 to 199 (ERRHREEDEEVARPKDRGLNIDT) show a composition bias toward basic and acidic residues. Residues 1094–1161 (GMIVAANVRV…KEFVSKLSMR (68 aa)) form the S1 motif domain. One can recognise an SH2 domain in the interval 1209–1306 (PLFKPFNSTQ…KKVDELMQCD (98 aa)).

This sequence belongs to the SPT6 family.

Its subcellular location is the nucleus. The protein resides in the chromosome. Histone H3-H4 chaperone that plays a role in maintenance of chromatin structure during RNA polymerase II transcription elongation thereby repressing transcription initiation from cryptic promoters. Mediates the reassembly of nucleosomes onto the promoters of at least a selected set of genes during repression; the nucleosome reassembly is essential for transcriptional repression. Essential for viability. The polypeptide is Transcription elongation factor spt-6 (spt-6) (Neurospora crassa (strain ATCC 24698 / 74-OR23-1A / CBS 708.71 / DSM 1257 / FGSC 987)).